The sequence spans 309 residues: ADP-L-glycero-D-manno-heptose-6-epimerase (309 aa).

Residues 10–11 (FI), 31–32 (DN), K38, K53, 75–79 (LGACS), and N92 each bind NADP(+). Y140 (proton acceptor) is an active-site residue. Residue K144 participates in NADP(+) binding. A substrate-binding site is contributed by N169. Positions 170 and 178 each coordinate NADP(+). The Proton acceptor role is filled by K178. Residues S180, H187, 201 to 204 (FLGS), R209, and Y272 contribute to the substrate site.

The protein belongs to the NAD(P)-dependent epimerase/dehydratase family. HldD subfamily. Homopentamer. NADP(+) serves as cofactor.

It carries out the reaction ADP-D-glycero-beta-D-manno-heptose = ADP-L-glycero-beta-D-manno-heptose. Its pathway is nucleotide-sugar biosynthesis; ADP-L-glycero-beta-D-manno-heptose biosynthesis; ADP-L-glycero-beta-D-manno-heptose from D-glycero-beta-D-manno-heptose 7-phosphate: step 4/4. Catalyzes the interconversion between ADP-D-glycero-beta-D-manno-heptose and ADP-L-glycero-beta-D-manno-heptose via an epimerization at carbon 6 of the heptose. The protein is ADP-L-glycero-D-manno-heptose-6-epimerase of Hamiltonella defensa subsp. Acyrthosiphon pisum (strain 5AT).